Reading from the N-terminus, the 644-residue chain is Chaperone protein HscA (644 aa).

This sequence belongs to the heat shock protein 70 family.

Functionally, chaperone involved in the maturation of iron-sulfur cluster-containing proteins. Has a low intrinsic ATPase activity which is markedly stimulated by HscB. Involved in the maturation of IscU. The polypeptide is Chaperone protein HscA (Yersinia pseudotuberculosis serotype I (strain IP32953)).